A 328-amino-acid chain; its full sequence is 3-dehydroquinate synthase (328 aa).

The protein belongs to the archaeal-type DHQ synthase family.

The catalysed reaction is 2-amino-2,3,7-trideoxy-D-lyxo-hept-6-ulosonate + NAD(+) + H2O = 3-dehydroquinate + NH4(+) + NADH + H(+). Catalyzes the oxidative deamination and cyclization of 2-amino-3,7-dideoxy-D-threo-hept-6-ulosonic acid (ADH) to yield 3-dehydroquinate (DHQ), which is fed into the canonical shikimic pathway of aromatic amino acid biosynthesis. The sequence is that of 3-dehydroquinate synthase from Methanosphaerula palustris (strain ATCC BAA-1556 / DSM 19958 / E1-9c).